An 89-amino-acid chain; its full sequence is MSEQVEKVRRALIGRVVSDKMQKTVTVLVERRVKHPLYGKIITRSAKYHAHVEDGGAGEGDLVEIEECRPISRTKTWRVTRVVEKARVI.

Belongs to the universal ribosomal protein uS17 family. In terms of assembly, part of the 30S ribosomal subunit.

One of the primary rRNA binding proteins, it binds specifically to the 5'-end of 16S ribosomal RNA. This is Small ribosomal subunit protein uS17 from Azoarcus sp. (strain BH72).